Consider the following 1134-residue polypeptide: Ubinuclein-1 (1134 aa).

Disordered regions lie at residues 1–38 (MSEP…HQDC) and 78–98 (LQPG…EKER). Residues 1–166 (MSEPHRVQFT…YGGFYINSGT (166 aa)) are sufficient for interaction with HIRA. Basic and acidic residues-rich tracts occupy residues 25 to 38 (RKEE…HQDC) and 81 to 98 (GDKK…EKER). A Phosphothreonine modification is found at threonine 166. Positions 171–220 (QASESEDDFIKEKKKKSPKKRKLKEGGEKIKKKKKDDTYDKEKKSKKSKF) are disordered. Phosphoserine occurs at positions 173 and 175. Positions 182–193 (EKKKKSPKKRKL) are enriched in basic residues. The span at 194–213 (KEGGEKIKKKKKDDTYDKEK) shows a compositional bias: basic and acidic residues. Lysine 222 carries the N6-acetyllysine modification. A compositionally biased stretch (basic and acidic residues) spans 253 to 268 (QKEKEAQKKREEEHKP). Disordered regions lie at residues 253 to 282 (QKEK…LREL), 321 to 358 (SESP…EGLP), 480 to 504 (EEEK…KGGR), and 594 to 660 (PSKI…LEDS). Serine 323, serine 336, serine 338, and serine 493 each carry phosphoserine. The stretch at 479-542 (LEEEKDKEQR…SQDLERNNKA (64 aa)) forms a coiled coil. Composition is skewed to basic and acidic residues over residues 480–493 (EEEK…RICS) and 598–610 (KVKE…DKKV). Phosphoserine occurs at positions 660 and 677. 2 disordered regions span residues 712–836 (TEEK…SPTQ) and 852–986 (QGFH…GVAK). Low complexity-rich tracts occupy residues 792–804 (GPQV…GPQV) and 856–891 (PSAP…KPHS). Positions 892–905 (VSSAGSSYKNNPFA) are enriched in polar residues. Residues 906–932 (SSISKHGVSSGSSSSGGTPVQSSVSGS) show a composition bias toward low complexity. The span at 941–950 (SVGQATSRPV) shows a compositional bias: polar residues. The span at 973 to 982 (PNGDSSGGTQ) shows a compositional bias: gly residues. Serine 1025 bears the Phosphoserine mark. The span at 1093-1108 (GLHSSPPHAAPLPHAA) shows a compositional bias: low complexity. A disordered region spans residues 1093 to 1134 (GLHSSPPHAAPLPHAAVPTHIPQSLPGASQLHGKGPAVPRKL).

This sequence belongs to the ubinuclein family. In terms of assembly, component of a complex that includes at least ASF1A, CABIN1, HIRA, histone H3.3 and UBN1. Interacts with HIRA (via WD repeat domain); the interaction is direct. Interacts with ASF1A, CEBPA, TJP1, TJP2 and TJP3. (Microbial infection) Interacts with Epstein-Barr virus BZLF1. Ubiquitous. Also expressed in numerous tumors and cancer cell lines.

The protein localises to the nucleus. Its subcellular location is the nucleoplasm. It localises to the PML body. The protein resides in the cell junction. It is found in the tight junction. In terms of biological role, acts as a novel regulator of senescence. Involved in the formation of senescence-associated heterochromatin foci (SAHF), which represses expression of proliferation-promoting genes. Binds to proliferation-promoting genes. May be required for replication-independent chromatin assembly. This is Ubinuclein-1 (UBN1) from Homo sapiens (Human).